The following is a 252-amino-acid chain: Protein BTG3 (252 aa).

The interval 138-162 (VTSDYHSGSSSSDEDTSKEVEVKPS) is disordered.

Belongs to the BTG family. In terms of tissue distribution, highly expressed in the brain.

Overexpression impairs serum-induced cell cycle progression from the G0/G1 to S phase. This Rattus norvegicus (Rat) protein is Protein BTG3.